A 1211-amino-acid polypeptide reads, in one-letter code: Homeodomain-interacting protein kinase 1 (1211 aa).

A Glycyl lysine isopeptide (Lys-Gly) (interchain with G-Cter in SUMO); alternate cross-link involves residue Lys-25. Residue Lys-25 forms a Glycyl lysine isopeptide (Lys-Gly) (interchain with G-Cter in SUMO2); alternate linkage. Residues Lys-120 and Lys-124 each participate in a glycyl lysine isopeptide (Lys-Gly) (interchain with G-Cter in SUMO2) cross-link. Residues 190 to 518 (YEVLEFLGRG…PLKTLNHQFV (329 aa)) enclose the Protein kinase domain. ATP is bound by residues 196–204 (LGRGTFGQV) and Lys-219. The Proton acceptor role is filled by Asp-315. The segment at 835-856 (QQQSSSLPSRKNKQSAPVSSTS) is disordered. The Nuclear localization signal 1 (NLS1) signature appears at 844 to 847 (RKNK). Ser-872 is modified (phosphoserine). The interval 885–1094 (PVQDQHQPII…FQHGSPLHST (210 aa)) is interaction with TP53. A required for localization to nuclear speckles region spans residues 891 to 998 (QPIIIPDTPS…PLKTQLGDCT (108 aa)). Residues 902-926 (PVSVITIRSDTDEEEDNKFKPSSSS) are SUMO interaction motifs (SIM); required for nuclear localization and kinase activity. A Glycyl lysine isopeptide (Lys-Gly) (interchain with G-Cter in SUMO2) cross-link involves residue Lys-991. Disordered regions lie at residues 1002 to 1023 (QASGLLSSSKTKPVASVSGQSS), 1047 to 1070 (LSQNQQSSSASTSQERSSNPAPRR), and 1085 to 1105 (FQHGSPLHSTGHPHLAPAPAH). Low complexity-rich tracts occupy residues 1048-1064 (SQNQQSSSASTSQERSS) and 1096-1105 (HPHLAPAPAH). Ser-1201 carries the phosphoserine modification. Lys-1204 participates in a covalent cross-link: Glycyl lysine isopeptide (Lys-Gly) (interchain with G-Cter in SUMO).

This sequence belongs to the protein kinase superfamily. CMGC Ser/Thr protein kinase family. HIPK subfamily. In terms of assembly, interacts with Nkx1-2, Nkx2-5, MYB, PARK7, DAXX and p53/TP53. Part of a cytoplasmic complex made of HIPK1, DAB2IP and MAP3K5 in response to TNF. This complex formation promotes MAP3K5-JNK activation and subsequent apoptosis. Post-translationally, phosphorylated and activated by JNK1. Autophosphorylated. Sumoylated. When conjugated it is directed to nuclear speckles. SENP1-mediated desumoylation is mediated by TNF in response to stress stimuli, triggering transient translocation from nucleus to cytoplasm.

Its subcellular location is the nucleus. It is found in the cytoplasm. It localises to the nucleus speckle. The catalysed reaction is L-seryl-[protein] + ATP = O-phospho-L-seryl-[protein] + ADP + H(+). It carries out the reaction L-threonyl-[protein] + ATP = O-phospho-L-threonyl-[protein] + ADP + H(+). Its function is as follows. Serine/threonine-protein kinase involved in transcription regulation and TNF-mediated cellular apoptosis. Plays a role as a corepressor for homeodomain transcription factors. Phosphorylates DAXX and MYB. Phosphorylates DAXX in response to stress, and mediates its translocation from the nucleus to the cytoplasm. Inactivates MYB transcription factor activity by phosphorylation. Prevents MAP3K5-JNK activation in the absence of TNF. TNF triggers its translocation to the cytoplasm in response to stress stimuli, thus activating nuclear MAP3K5-JNK by derepression and promoting apoptosis. May be involved in anti-oxidative stress responses. Involved in the regulation of eye size, lens formation and retinal lamination during late embryogenesis. Promotes angiogenesis and to be involved in erythroid differentiation. May be involved in malignant squamous cell tumor formation. Phosphorylates PAGE4 at 'Thr-51' which is critical for the ability of PAGE4 to potentiate the transcriptional activator activity of JUN. This is Homeodomain-interacting protein kinase 1 from Rattus norvegicus (Rat).